Reading from the N-terminus, the 878-residue chain is DNA mismatch repair protein MutS (878 aa).

618–625 lines the ATP pocket; the sequence is GPNMGGKS. 2 stretches are compositionally biased toward basic and acidic residues: residues 800 to 811 and 863 to 878; these read LEEESSRQRAEP and GADKKARGDAVDARSR. 2 disordered regions span residues 800-842 and 859-878; these read LEEE…PDEL and SGEEGADKKARGDAVDARSR.

It belongs to the DNA mismatch repair MutS family.

Its function is as follows. This protein is involved in the repair of mismatches in DNA. It is possible that it carries out the mismatch recognition step. This protein has a weak ATPase activity. The chain is DNA mismatch repair protein MutS from Alkalilimnicola ehrlichii (strain ATCC BAA-1101 / DSM 17681 / MLHE-1).